A 578-amino-acid polypeptide reads, in one-letter code: SUMOylated effector protein AmpA (578 aa).

A disordered region spans residues 144 to 169; sequence PQTVDPSVVESATGSGVDTQEEQEID. A run of 3 repeats spans residues 180–272, 304–425, and 428–557. The 3 X approximate tandem repeats stretch occupies residues 180 to 557; it reads TEEQEVILEE…VEADAGMQQE (378 aa). The interval 516 to 578 is disordered; the sequence is VSVEADAGMQ…DPDDEDVLSY (63 aa).

In terms of processing, polysumoylated during infection on at least two lysine residues, in the N- and C-terminal section. SUMO2/3 modification of AmpA throughout the infection cycle is likely critical for bacterial intracellular survival, while terminal SUMO1 conjugation of AmpA may promote a late-stage infection cycle event. Only a small portion of the available AmpA pool is actually SUMOylated at any given time.

The protein localises to the secreted. Its subcellular location is the host membrane. It is found in the host cytoplasm. It localises to the host cytosol. Functionally, secreted effector that hijacks host cell SUMOylation during A.phagocytophilum infection and is important for the pathogen's intracellular survival. In Anaplasma phagocytophilum (strain HZ), this protein is SUMOylated effector protein AmpA.